The sequence spans 240 residues: Large ribosomal subunit protein bL25 (240 aa).

Disordered stretches follow at residues 1 to 20 and 220 to 240; these read MAEN…GPAR and PAAG…KGKK. The span at 220–229 shows a compositional bias: low complexity; the sequence is PAAGAAPAKG. A compositionally biased stretch (basic and acidic residues) spans 230 to 240; that stretch reads GEAKGGDKGKK.

Belongs to the bacterial ribosomal protein bL25 family. CTC subfamily. Part of the 50S ribosomal subunit; part of the 5S rRNA/L5/L18/L25 subcomplex. Contacts the 5S rRNA. Binds to the 5S rRNA independently of L5 and L18.

Its function is as follows. This is one of the proteins that binds to the 5S RNA in the ribosome where it forms part of the central protuberance. In Anaeromyxobacter dehalogenans (strain 2CP-C), this protein is Large ribosomal subunit protein bL25.